The primary structure comprises 336 residues: Transcription factor MYB29 (336 aa).

HTH myb-type domains are found at residues 9-65 and 66-116; these read GEGL…KPDI and KRGE…KKLL. DNA-binding regions (H-T-H motif) lie at residues 37 to 61 and 89 to 112; these read WRDI…ANYL and WSVI…NTHL. The tract at residues 127 to 170 is disordered; the sequence is KPLAYDSNPDEQSQSGSISPKSLPPSSSKNVPEITSSDETPKYD. The span at 141–154 shows a compositional bias: low complexity; sequence SGSISPKSLPPSSS. Over residues 155–164 the composition is skewed to polar residues; that stretch reads KNVPEITSSD.

In terms of assembly, can form complexes with MYC2, MYC3 or MYC4. In terms of tissue distribution, expressed in both vegetative and generative organs. Mostly present in seedlings, inflorescences, roots and stems, and, to a lower extent, in leaves (in midvein and trichomes) and siliques.

It is found in the nucleus. Functionally, plays a minor rheostat role in aliphatic glucosinolates (GLSs) biosynthesis, mostly short chained. Together with MYB28/HAG1 and MYB76/HAG2, promotes aliphatic glucosinolate biosynthesis but represses indolic glucosinolate biosynthesis. Prevents insect performance (e.g. lepidopteran insect Mamestra brassicae) by promoting glucosinolates. The chain is Transcription factor MYB29 (MYB29) from Arabidopsis thaliana (Mouse-ear cress).